Reading from the N-terminus, the 216-residue chain is Noggin-1 (216 aa).

The first 18 residues, 1-18 (MDFPRFLLSAYLLLLSFA), serve as a signal peptide directing secretion. The N-linked (GlcNAc...) asparagine glycan is linked to N55.

The protein belongs to the noggin family. Homodimer; disulfide-linked.

The protein localises to the secreted. Functionally, inhibitor of bone morphogenetic proteins (BMP) signaling. May play an important role in the dorsoventral patterning of the embryo. This is Noggin-1 (nog1) from Danio rerio (Zebrafish).